A 227-amino-acid polypeptide reads, in one-letter code: Cytochrome c oxidase subunit 2 (227 aa).

Residues 1–14 are Mitochondrial intermembrane-facing; sequence MAYPMQLGFQDATS. The helical transmembrane segment at 15–45 threads the bilayer; it reads PIMEELLHFHDHTLMIVFLISSLVLYIISLM. Residues 46-59 lie on the Mitochondrial matrix side of the membrane; sequence LTTKLTHTSTMDAQ. Residues 60–87 form a helical membrane-spanning segment; the sequence is EVETIWTILPAIILIMIALPSLRILYMM. At 88–227 the chain is on the mitochondrial intermembrane side; that stretch reads DEINNPSLTV…YFEKWSASML (140 aa). Cys196, Glu198, Cys200, His204, and Met207 together coordinate Cu cation. Mg(2+) is bound at residue Glu198. Tyr218 is modified (phosphotyrosine).

The protein belongs to the cytochrome c oxidase subunit 2 family. Component of the cytochrome c oxidase (complex IV, CIV), a multisubunit enzyme composed of 14 subunits. The complex is composed of a catalytic core of 3 subunits MT-CO1, MT-CO2 and MT-CO3, encoded in the mitochondrial DNA, and 11 supernumerary subunits COX4I, COX5A, COX5B, COX6A, COX6B, COX6C, COX7A, COX7B, COX7C, COX8 and NDUFA4, which are encoded in the nuclear genome. The complex exists as a monomer or a dimer and forms supercomplexes (SCs) in the inner mitochondrial membrane with NADH-ubiquinone oxidoreductase (complex I, CI) and ubiquinol-cytochrome c oxidoreductase (cytochrome b-c1 complex, complex III, CIII), resulting in different assemblies (supercomplex SCI(1)III(2)IV(1) and megacomplex MCI(2)III(2)IV(2)). Found in a complex with TMEM177, COA6, COX18, COX20, SCO1 and SCO2. Interacts with TMEM177 in a COX20-dependent manner. Interacts with COX20. Interacts with COX16. It depends on Cu cation as a cofactor.

Its subcellular location is the mitochondrion inner membrane. The enzyme catalyses 4 Fe(II)-[cytochrome c] + O2 + 8 H(+)(in) = 4 Fe(III)-[cytochrome c] + 2 H2O + 4 H(+)(out). Component of the cytochrome c oxidase, the last enzyme in the mitochondrial electron transport chain which drives oxidative phosphorylation. The respiratory chain contains 3 multisubunit complexes succinate dehydrogenase (complex II, CII), ubiquinol-cytochrome c oxidoreductase (cytochrome b-c1 complex, complex III, CIII) and cytochrome c oxidase (complex IV, CIV), that cooperate to transfer electrons derived from NADH and succinate to molecular oxygen, creating an electrochemical gradient over the inner membrane that drives transmembrane transport and the ATP synthase. Cytochrome c oxidase is the component of the respiratory chain that catalyzes the reduction of oxygen to water. Electrons originating from reduced cytochrome c in the intermembrane space (IMS) are transferred via the dinuclear copper A center (CU(A)) of subunit 2 and heme A of subunit 1 to the active site in subunit 1, a binuclear center (BNC) formed by heme A3 and copper B (CU(B)). The BNC reduces molecular oxygen to 2 water molecules using 4 electrons from cytochrome c in the IMS and 4 protons from the mitochondrial matrix. This chain is Cytochrome c oxidase subunit 2 (MT-CO2), found in Ovis aries (Sheep).